The chain runs to 414 residues: DNA polymerase IV 1 (414 aa).

The region spanning 8–189 is the UmuC domain; sequence IFHIDMNSFY…LPVGEMHGVG (182 aa). D12 and D108 together coordinate Mg(2+). The active site involves E109. Residues 391–414 are disordered; the sequence is LKKEESKTKGTSFNKDFFQDEKKS.

Belongs to the DNA polymerase type-Y family. In terms of assembly, monomer. Mg(2+) is required as a cofactor.

It is found in the cytoplasm. The catalysed reaction is DNA(n) + a 2'-deoxyribonucleoside 5'-triphosphate = DNA(n+1) + diphosphate. In terms of biological role, poorly processive, error-prone DNA polymerase involved in untargeted mutagenesis. Copies undamaged DNA at stalled replication forks, which arise in vivo from mismatched or misaligned primer ends. These misaligned primers can be extended by PolIV. Exhibits no 3'-5' exonuclease (proofreading) activity. May be involved in translesion synthesis (TSL), in conjunction with the beta clamp from PolIII. The sequence is that of DNA polymerase IV 1 (dinB1) from Bacillus subtilis (strain 168).